The chain runs to 203 residues: Holliday junction branch migration complex subunit RuvA (203 aa).

Positions 1–65 are domain I; sequence MIAYIHGKLL…EDAFDLYGFP (65 aa). Residues 66–144 form a domain II region; sequence CFDDREVFRT…TLKSATVRSG (79 aa). The segment at 145–155 is flexible linker; sequence ACPVEGDRSEF. Positions 155-203 are domain III; that stretch reads FLDALSGLRNLGYGDDEVRDFLKDIFDEEPDLDAGGAIRVALKKISQNK.

The protein belongs to the RuvA family. In terms of assembly, homotetramer. Forms an RuvA(8)-RuvB(12)-Holliday junction (HJ) complex. HJ DNA is sandwiched between 2 RuvA tetramers; dsDNA enters through RuvA and exits via RuvB. An RuvB hexamer assembles on each DNA strand where it exits the tetramer. Each RuvB hexamer is contacted by two RuvA subunits (via domain III) on 2 adjacent RuvB subunits; this complex drives branch migration. In the full resolvosome a probable DNA-RuvA(4)-RuvB(12)-RuvC(2) complex forms which resolves the HJ.

The protein resides in the cytoplasm. The RuvA-RuvB-RuvC complex processes Holliday junction (HJ) DNA during genetic recombination and DNA repair, while the RuvA-RuvB complex plays an important role in the rescue of blocked DNA replication forks via replication fork reversal (RFR). RuvA specifically binds to HJ cruciform DNA, conferring on it an open structure. The RuvB hexamer acts as an ATP-dependent pump, pulling dsDNA into and through the RuvAB complex. HJ branch migration allows RuvC to scan DNA until it finds its consensus sequence, where it cleaves and resolves the cruciform DNA. This Maridesulfovibrio salexigens (strain ATCC 14822 / DSM 2638 / NCIMB 8403 / VKM B-1763) (Desulfovibrio salexigens) protein is Holliday junction branch migration complex subunit RuvA.